Consider the following 249-residue polypeptide: Proteasome subunit alpha type-7 (249 aa).

It belongs to the peptidase T1A family. As to quaternary structure, the 26S proteasome consists of a 20S proteasome core and two 19S regulatory subunits. The 20S proteasome core is composed of 28 subunits that are arranged in four stacked rings, resulting in a barrel-shaped structure. The two end rings are each formed by seven alpha subunits, and the two central rings are each formed by seven beta subunits. The catalytic chamber with the active sites is on the inside of the barrel.

The protein localises to the cytoplasm. Its subcellular location is the nucleus. Its function is as follows. The proteasome is a multicatalytic proteinase complex which is characterized by its ability to cleave peptides with Arg, Phe, Tyr, Leu, and Glu adjacent to the leaving group at neutral or slightly basic pH. The proteasome has an ATP-dependent proteolytic activity. This Cicer arietinum (Chickpea) protein is Proteasome subunit alpha type-7 (PAD1).